The following is a 162-amino-acid chain: uncharacterized protein (162 aa).

This is an uncharacterized protein from Schizosaccharomyces pombe (strain 972 / ATCC 24843) (Fission yeast).